A 548-amino-acid chain; its full sequence is Poly(ADP-ribose) glycohydrolase 1 (548 aa).

Belongs to the poly(ADP-ribose) glycohydrolase family.

It catalyses the reaction [(1''-&gt;2')-ADP-alpha-D-ribose](n) + H2O = [(1''-&gt;2')-ADP-alpha-D-ribose](n-1) + ADP-D-ribose. In terms of biological role, poly(ADP-ribose) synthesized after DNA damage is only present transiently and is rapidly degraded by poly(ADP-ribose) glycohydrolase. Involved in establishing period length of the circadian oscillator. May regulate post-translational poly(ADP-ribosyl)ation of an oscillator component. This Arabidopsis thaliana (Mouse-ear cress) protein is Poly(ADP-ribose) glycohydrolase 1 (PARG1).